Consider the following 139-residue polypeptide: Protocatechuate 4,5-dioxygenase alpha chain (139 aa).

As to quaternary structure, composed of two subunits (alpha and beta) in a 1:1 ratio. Fe(2+) serves as cofactor.

It carries out the reaction 3,4-dihydroxybenzoate + O2 = 4-carboxy-2-hydroxy-cis,cis-muconate 6-semialdehyde + H(+). In terms of biological role, responsible for the aromatic ring fission of protocatechuate. This is Protocatechuate 4,5-dioxygenase alpha chain (ligA) from Sphingobium sp. (strain NBRC 103272 / SYK-6).